Here is a 355-residue protein sequence, read N- to C-terminus: Guanine nucleotide-binding protein G(i) subunit alpha-2 (355 aa).

G2 carries N-myristoyl glycine lipidation. C3 carries S-palmitoyl cysteine lipidation. Positions 32–355 (REVKLLLLGA…KNNLKDCGLF (324 aa)) constitute a G-alpha domain. The segment at 35–48 (KLLLLGAGESGKST) is G1 motif. Residues 40–47 (GAGESGKS), 176–182 (LRTRVKT), 201–205 (DVGGQ), 270–273 (NKKD), and A327 each bind GTP. Positions 47 and 182 each coordinate Mg(2+). A G2 motif region spans residues 174 to 182 (DVLRTRVKT). Residues 197–206 (FKMFDVGGQR) form a G3 motif region. The segment at 266-273 (ILFLNKKD) is G4 motif. Residues 325–330 (TCATDT) form a G5 motif region.

It belongs to the G-alpha family. G(i/o/t/z) subfamily. In terms of assembly, g proteins are composed of 3 units; alpha, beta and gamma. The alpha chain contains the guanine nucleotide binding site.

The protein localises to the cytoplasm. It localises to the cytoskeleton. Its subcellular location is the microtubule organizing center. It is found in the centrosome. The protein resides in the cell membrane. Its function is as follows. Guanine nucleotide-binding proteins (G proteins) are involved as modulators or transducers in various transmembrane signaling systems. The G(i) proteins are involved in hormonal regulation of adenylate cyclase: they inhibit the cyclase in response to beta-adrenergic stimuli. May play a role in cell division. The protein is Guanine nucleotide-binding protein G(i) subunit alpha-2 (gnai2) of Oryzias latipes (Japanese rice fish).